Here is a 484-residue protein sequence, read N- to C-terminus: HTH-type transcriptional regulator TauR (484 aa).

The HTH gntR-type domain maps to 16 to 84; it reads GSLQHRLRQM…GRSGTFVSAA (69 aa). A DNA-binding region (H-T-H motif) is located at residues 44-63; that stretch reads TRALAAHLGVARITVTLAYA. Residue Lys-330 is modified to N6-(pyridoxal phosphate)lysine.

This sequence in the C-terminal section; belongs to the class-I pyridoxal-phosphate-dependent aminotransferase family. Pyridoxal 5'-phosphate is required as a cofactor.

Functionally, transcriptional activator, which is essential for taurine-dependent expression of the tpa-tauR-xsc operon. Acts by binding to direct repeats in the promoter region. The sequence is that of HTH-type transcriptional regulator TauR from Rhodobacter capsulatus (strain ATCC BAA-309 / NBRC 16581 / SB1003).